A 21-amino-acid polypeptide reads, in one-letter code: Nucleoside diphosphate kinase (21 aa).

Residue His4 is the Pros-phosphohistidine intermediate of the active site.

It belongs to the NDK family. Homohexamer. The cofactor is Mg(2+).

The protein localises to the cytoplasm. It catalyses the reaction a 2'-deoxyribonucleoside 5'-diphosphate + ATP = a 2'-deoxyribonucleoside 5'-triphosphate + ADP. The enzyme catalyses a ribonucleoside 5'-diphosphate + ATP = a ribonucleoside 5'-triphosphate + ADP. Functionally, major role in the synthesis of nucleoside triphosphates other than ATP. The ATP gamma phosphate is transferred to the NDP beta phosphate via a ping-pong mechanism, using a phosphorylated active-site intermediate. The sequence is that of Nucleoside diphosphate kinase (NDK1) from Candida albicans (Yeast).